Here is a 707-residue protein sequence, read N- to C-terminus: MHHDNFRRLGNAAFAAAAALLAVACGGGDSSDGNTNPNIKPANIGTVTIQAYDGATDDLLTAGLGKDGLASATAPVPASPNSPTAAELRRYAIYTNYRAIVDTTAGGGFGSLYGPNVDAQGNVTTGQGKIAGVEYLAFSDDGSGQENVTMLVQIPNTFNQSKPCMITATSSGSRGVYGAIAVGEWGLKRGCAVAYTDKGTGAAPHDLDTDTVPLIDGTRTTRSAAGTNAQFAARPGILSLADFTAQVPHRLAFKHAHSQRNPEKDWGKFTLQAIEFGIWAINDRFGTVASNGVRQRTLAKSKIVVIASSVSNGGGAAVAAAEQDTDGLIDGVAVAEPNLNLPPNASILVKRGSKPVNASGRLLYDYITTANLLQLCASQATALVNAPAFATNQFYISRCQTLVDNKLISGTTVSDQAASALDQLHLAGWEPESDALHPSLSLFDTAASIAVTYANSYARASVTDRLCGYSFAATLADFKPAAIAPSVLASMFATGNGVPPTSTVQLINDRDLQHGPFMNGQSVSASNNRADANFDGAKCLRDLLTGTDSQAQALQSGVSQIQRSGNLHGKPALIVHGRSDGLLPVNHTSRPYLGFNRQQEGAASKLSYIEVENAQHFDAFIGAVSGYSNRYVPLHLYLIRALDAVYDNLTTGKALPPSQVVRTIPRGGATNTTTAPTLLPVNVPPISASPDAANQIAASTGSVDVPD.

An N-terminal signal peptide occupies residues 1–24 (MHHDNFRRLGNAAFAAAAALLAVA). Catalysis depends on Ser-311, which acts as the Charge relay system.

This sequence belongs to the D-(-)-3-hydroxybutyrate oligomer hydrolase family.

The protein resides in the secreted. The catalysed reaction is (3R)-hydroxybutanoate dimer + H2O = 2 (R)-3-hydroxybutanoate + H(+). It participates in lipid metabolism; butanoate metabolism. Participates in the degradation of poly-3-hydroxybutyrate (PHB). It works downstream of poly(3-hydroxybutyrate) depolymerase, hydrolyzing D(-)-3-hydroxybutyrate oligomers of various length (3HB-oligomers) into 3HB-monomers. This chain is D-(-)-3-hydroxybutyrate oligomer hydrolase, found in Cupriavidus pinatubonensis (strain JMP 134 / LMG 1197) (Cupriavidus necator (strain JMP 134)).